We begin with the raw amino-acid sequence, 370 residues long: StAR-related lipid transfer protein 7, mitochondrial (370 aa).

The transit peptide at 1-58 (MLPRRLLAAWLAGTRGGGLLALLANQCRFVTGLRVRRAQQIAQLYGRLYSESSRRVLL) directs the protein to the mitochondrion. Residues 86 to 111 (DEERIQEEELQRSINEMKRLEEMSNM) adopt a coiled-coil conformation. Disordered stretches follow at residues 111-138 (MFQS…EGKE) and 343-370 (MSSE…IEYA). An START domain is found at 112-327 (FQSSGVQHHP…LHMATLKAKN (216 aa)).

Proteolytically cleaved by PARL. In terms of tissue distribution, expressed in nasal epithelial cells. Down-regulated in nasal epithelial cells in patients experiencing an asthma exacerbation as compared to stable asthmatics and healthy controls.

It is found in the mitochondrion. Its function is as follows. May play a protective role in mucosal tissues by preventing exaggerated allergic responses. The protein is StAR-related lipid transfer protein 7, mitochondrial (STARD7) of Homo sapiens (Human).